Here is a 353-residue protein sequence, read N- to C-terminus: UPF0421 protein YgaE (353 aa).

4 helical membrane passes run 20 to 40 (LASW…IFAI), 67 to 87 (VFGL…VIVI), 103 to 123 (LVTV…FALI), and 125 to 145 (TSTV…FLPP).

The protein belongs to the UPF0421 family.

The protein resides in the cell membrane. The polypeptide is UPF0421 protein YgaE (ygaE) (Bacillus subtilis (strain 168)).